We begin with the raw amino-acid sequence, 214 residues long: Nucleoplasmin-2 (214 aa).

Residues 119-214 (ERYEASDLTW…ARAKKPGFKK (96 aa)) are disordered. Positions 127 to 155 (TWEEEEEEEGEEEEEEEEDDEDEDADISL) are enriched in acidic residues. The interval 129 to 152 (EEEEEEEGEEEEEEEEDDEDEDAD) is acidic tract A2. The short motif at 165–180 (KRLVPQKQASVAKKKK) is the Bipartite nuclear localization signal element. Over residues 181 to 197 (LEKEEEEIRASVRDKSP) the composition is skewed to basic and acidic residues. Residues 198–214 (VKKAKATARAKKPGFKK) are compositionally biased toward basic residues.

It belongs to the nucleoplasmin family. In terms of assembly, homopentamer, when bound to H2A-H2B dimers only. Homodecamer of two stacked pentamers, when bound to H2A-H2B dimers and H3-H4 tetramers simultaneously.

It is found in the nucleus. In terms of biological role, core histones chaperone involved in chromatin reprogramming, specially during fertilization and early embryonic development. Probably involved in sperm DNA decondensation during fertilization. This Homo sapiens (Human) protein is Nucleoplasmin-2 (NPM2).